The chain runs to 78 residues: Acyl carrier protein (78 aa).

Residues 4-78 enclose the Carrier domain; it reads AEIKDKVYDI…QQAIDYIVKK (75 aa). Serine 39 carries the O-(pantetheine 4'-phosphoryl)serine modification.

Belongs to the acyl carrier protein (ACP) family. Post-translationally, 4'-phosphopantetheine is transferred from CoA to a specific serine of apo-ACP by AcpS. This modification is essential for activity because fatty acids are bound in thioester linkage to the sulfhydryl of the prosthetic group.

Its subcellular location is the cytoplasm. Its pathway is lipid metabolism; fatty acid biosynthesis. Carrier of the growing fatty acid chain in fatty acid biosynthesis. This chain is Acyl carrier protein, found in Chlorobium phaeovibrioides (strain DSM 265 / 1930) (Prosthecochloris vibrioformis (strain DSM 265)).